The following is a 257-amino-acid chain: MLKSLTSQGLVLYNRNFREDDKLVKIFTEQAGKRMFFVKHAGKSKLAPVIQPLTAANLLMKINDDGLSYIEDYQDVVTYHRINEDLFIMAYASYVAALADASLQDNQPDPALFAFLQKTLELMNNGLDYEVLTNIFEIQILSRFGVSLNFHDCAFCHRTGLPFDFSFKYSGVLCPDHYHQDERRCHLNPNLPFLLDQFQAVRFSELETISLKPDIKKQLRDFIDLLYDEYVGIHLKSKKFIDSLGDWGSILKDKNEE.

The protein belongs to the RecO family.

Functionally, involved in DNA repair and RecF pathway recombination. This chain is DNA repair protein RecO, found in Streptococcus sanguinis (strain SK36).